A 243-amino-acid polypeptide reads, in one-letter code: Ribonuclease 3 (243 aa).

In terms of domain architecture, RNase III spans Val10–Gly146. Glu59 is a binding site for Mg(2+). Residue Asp63 is part of the active site. Positions 132 and 135 each coordinate Mg(2+). Glu135 is an active-site residue. Residues Asp172–Gln241 enclose the DRBM domain. Positions Gly219–Ala231 are enriched in basic and acidic residues. Residues Gly219–Lys243 are disordered.

Belongs to the ribonuclease III family. As to quaternary structure, homodimer. Requires Mg(2+) as cofactor.

It is found in the cytoplasm. The enzyme catalyses Endonucleolytic cleavage to 5'-phosphomonoester.. In terms of biological role, digests double-stranded RNA. Involved in the processing of primary rRNA transcript to yield the immediate precursors to the large and small rRNAs (23S and 16S). Processes some mRNAs, and tRNAs when they are encoded in the rRNA operon. Processes pre-crRNA and tracrRNA of type II CRISPR loci if present in the organism. This is Ribonuclease 3 from Staphylococcus aureus (strain Mu3 / ATCC 700698).